The primary structure comprises 248 residues: Probable transcriptional regulatory protein Plav_2114 (248 aa).

Belongs to the TACO1 family.

The protein resides in the cytoplasm. This is Probable transcriptional regulatory protein Plav_2114 from Parvibaculum lavamentivorans (strain DS-1 / DSM 13023 / NCIMB 13966).